The chain runs to 217 residues: tRNA (guanine-N(7)-)-methyltransferase (217 aa).

Residues glutamate 44, glutamate 69, aspartate 96, and aspartate 118 each contribute to the S-adenosyl-L-methionine site. Aspartate 118 is an active-site residue. Substrate is bound by residues lysine 122, aspartate 154, and threonine 191–glutamate 194.

Belongs to the class I-like SAM-binding methyltransferase superfamily. TrmB family.

The catalysed reaction is guanosine(46) in tRNA + S-adenosyl-L-methionine = N(7)-methylguanosine(46) in tRNA + S-adenosyl-L-homocysteine. It participates in tRNA modification; N(7)-methylguanine-tRNA biosynthesis. Functionally, catalyzes the formation of N(7)-methylguanine at position 46 (m7G46) in tRNA. This chain is tRNA (guanine-N(7)-)-methyltransferase, found in Bacillus mycoides (strain KBAB4) (Bacillus weihenstephanensis).